Consider the following 932-residue polypeptide: RNA-binding protein 12 (932 aa).

The tract at residues 97-116 (IPPANASRSGPPPSSGMSGR) is disordered. Over residues 98–116 (PPANASRSGPPPSSGMSGR) the composition is skewed to low complexity. One can recognise an RRM 1 domain in the interval 304–379 (LYVSVHGMPF…RYVEVSPATE (76 aa)). Ser352 and Ser375 each carry phosphoserine. The segment at 393 to 424 (QNMGPSGQSHPPPQTLPRSKSPSGQKRSRSRS) is disordered. Polar residues predominate over residues 408-417 (LPRSKSPSGQ). Phosphoserine is present on residues Ser420, Ser422, and Ser424. The 78-residue stretch at 430–507 (FCVYLKGLPF…RFIQVHPITK (78 aa)) folds into the RRM 2 domain. Position 525 is a phosphoserine (Ser525). Residues 717 to 734 (NGPPFNFPGNFGGSNAFG) show a composition bias toward low complexity. The segment at 717–853 (NGPPFNFPGN…PGFASSSGKP (137 aa)) is disordered. Residues 783-811 (SGFGGGPQNFGNGPGSLGGPPGFGSGPPG) are compositionally biased toward gly residues. Residues 824–836 (AFGPGPGPGPGPG) are compositionally biased toward pro residues. Positions 856-932 (TVIKVQNMPF…GSRKVKLVLG (77 aa)) constitute an RRM 3 domain.

The protein resides in the nucleus. The chain is RNA-binding protein 12 (RBM12) from Macaca mulatta (Rhesus macaque).